Reading from the N-terminus, the 318-residue chain is NADH-ubiquinone oxidoreductase chain 1 (318 aa).

The next 8 helical transmembrane spans lie at 2-22, 76-96, 100-120, 146-166, 171-191, 222-242, 253-273, and 294-314; these read PMIN…FLML, ALAL…IPLI, LGLL…LWSG, LALI…SALI, HSWL…STLA, LFFM…TMIF, ELYT…FLWI, and LPLT…TSGI.

This sequence belongs to the complex I subunit 1 family. As to quaternary structure, core subunit of respiratory chain NADH dehydrogenase (Complex I) which is composed of 45 different subunits.

It is found in the mitochondrion inner membrane. It catalyses the reaction a ubiquinone + NADH + 5 H(+)(in) = a ubiquinol + NAD(+) + 4 H(+)(out). Functionally, core subunit of the mitochondrial membrane respiratory chain NADH dehydrogenase (Complex I) which catalyzes electron transfer from NADH through the respiratory chain, using ubiquinone as an electron acceptor. Essential for the catalytic activity and assembly of complex I. The polypeptide is NADH-ubiquinone oxidoreductase chain 1 (MT-ND1) (Pongo abelii (Sumatran orangutan)).